We begin with the raw amino-acid sequence, 515 residues long: MPTLRSATASASTAGTASPTAIATPRSAKRRLTSPRRAAGSPDASQFTSPHKSPNVGIVGTPKLLSASPRSSRKRLYGDFVAAEKPKWNPRGKSPESHFSRAQSSDWDLTKEFICSADPAQMQVVKEALHVATVPSCGLVCRDDEQSRVLEFCKGCVEQERSGSLYVCGCPGTGKTLSINKVKESVARWADETGMETPDALSINCTSLAKTHEIFSKILAKFQTRKKATCKLSPLQQLQTMFSHKESAPRRMLLVVVDEMDYLITRDRAVLHDLFMLTTYQFSRCILIGIANAIDLADRFLPKLESLNCKPLVVTFRAYSKDQISDIIKHRLKVLEYDVFEPLALEFCARKVAAASGDMRKALGVCRSAVEVFEARLQESSDQEFGLVTFDHMDIALSKAFKSPVVDSILCLPQHQQMVLCALANTFHHCKKKATTLGELNKSYIEICRSTQVPAVGMLEFSNMCMVLSDQGFMKLGQSKEDKLRRVMLQIDSSDITFAFKGNRFFQKCLEQQKF.

The span at 1 to 24 (MPTLRSATASASTAGTASPTAIAT) shows a compositional bias: low complexity. Residues 1-70 (MPTLRSATAS…TPKLLSASPR (70 aa)) form a disordered region. A compositionally biased stretch (polar residues) spans 43–52 (DASQFTSPHK).

Belongs to the CDC6/cdc18 family.

The protein resides in the nucleus. May be involved in the initiation of DNA replication. This is Cell division control protein 6 homolog from Oryza sativa subsp. japonica (Rice).